A 78-amino-acid polypeptide reads, in one-letter code: Acyl carrier protein (78 aa).

One can recognise a Carrier domain in the interval S2 to L77. An O-(pantetheine 4'-phosphoryl)serine modification is found at S37.

Belongs to the acyl carrier protein (ACP) family. Post-translationally, 4'-phosphopantetheine is transferred from CoA to a specific serine of apo-ACP by AcpS. This modification is essential for activity because fatty acids are bound in thioester linkage to the sulfhydryl of the prosthetic group.

Its subcellular location is the cytoplasm. It participates in lipid metabolism; fatty acid biosynthesis. In terms of biological role, carrier of the growing fatty acid chain in fatty acid biosynthesis. In Acinetobacter baylyi (strain ATCC 33305 / BD413 / ADP1), this protein is Acyl carrier protein.